A 240-amino-acid chain; its full sequence is Probable transcriptional regulatory protein MS53_0373 (240 aa).

It belongs to the TACO1 family.

The protein localises to the cytoplasm. The polypeptide is Probable transcriptional regulatory protein MS53_0373 (Mycoplasmopsis synoviae (strain 53) (Mycoplasma synoviae)).